We begin with the raw amino-acid sequence, 214 residues long: Holliday junction branch migration complex subunit RuvA (214 aa).

The interval 1 to 67 (MVGWLKGLIV…ADNWQFFGFK (67 aa)) is domain I. A domain II region spans residues 68-146 (STQERDIFRE…AFAGMDPAPS (79 aa)). The interval 147–154 (LAEGVSSE) is flexible linker. The domain III stretch occupies residues 155–214 (QMPESGADVEATLSMLGYDDLEVRRAIRAIAEGSDGPPPPGDDQDAWLRGCLQWLSRDSA).

It belongs to the RuvA family. Homotetramer. Forms an RuvA(8)-RuvB(12)-Holliday junction (HJ) complex. HJ DNA is sandwiched between 2 RuvA tetramers; dsDNA enters through RuvA and exits via RuvB. An RuvB hexamer assembles on each DNA strand where it exits the tetramer. Each RuvB hexamer is contacted by two RuvA subunits (via domain III) on 2 adjacent RuvB subunits; this complex drives branch migration. In the full resolvosome a probable DNA-RuvA(4)-RuvB(12)-RuvC(2) complex forms which resolves the HJ.

It localises to the cytoplasm. Functionally, the RuvA-RuvB-RuvC complex processes Holliday junction (HJ) DNA during genetic recombination and DNA repair, while the RuvA-RuvB complex plays an important role in the rescue of blocked DNA replication forks via replication fork reversal (RFR). RuvA specifically binds to HJ cruciform DNA, conferring on it an open structure. The RuvB hexamer acts as an ATP-dependent pump, pulling dsDNA into and through the RuvAB complex. HJ branch migration allows RuvC to scan DNA until it finds its consensus sequence, where it cleaves and resolves the cruciform DNA. The sequence is that of Holliday junction branch migration complex subunit RuvA from Synechococcus sp. (strain CC9605).